We begin with the raw amino-acid sequence, 192 residues long: MTEQSIDNILPSSEKNVKQWYVVHTASGAEKRIKEDMLRRIAKQKMTDFFEDILIPVFGVSEVKRGKNVKVEKKLMPSYILIKMNMTDKSWHLVKNIPGVTGFLGSKTTPKALTESEIQNIFNNLEAEAKETKNSKLYEVGEIVIVTDGPFETFTGTVEEIDQEKNRLKVSVSIFGKATPIELNFNQVKKND.

One can recognise a KOW domain in the interval 140-168 (VGEIVIVTDGPFETFTGTVEEIDQEKNRL).

The protein belongs to the NusG family.

Participates in transcription elongation, termination and antitermination. This chain is Transcription termination/antitermination protein NusG, found in Rickettsia felis (strain ATCC VR-1525 / URRWXCal2) (Rickettsia azadi).